Reading from the N-terminus, the 126-residue chain is Large ribosomal subunit protein bL17 (126 aa).

It belongs to the bacterial ribosomal protein bL17 family. As to quaternary structure, part of the 50S ribosomal subunit. Contacts protein L32.

This chain is Large ribosomal subunit protein bL17, found in Lawsonia intracellularis (strain PHE/MN1-00).